The chain runs to 480 residues: Alpha-glucosidase (480 aa).

4 to 70 (VKIGIIGAGS…ADLKFEKTMN (67 aa)) serves as a coordination point for NAD(+). 2 residues coordinate substrate: Asp-119 and Asn-153. Position 174 (Cys-174) interacts with Mn(2+). Catalysis depends on His-175, which acts as the Proton donor. Residue His-203 coordinates Mn(2+). Residue Asp-260 is the Proton acceptor of the active site.

Belongs to the glycosyl hydrolase 4 family. As to quaternary structure, homodimer. NAD(+) serves as cofactor. Mn(2+) is required as a cofactor. Requires Co(2+) as cofactor. It depends on Ni(2+) as a cofactor.

The catalysed reaction is Hydrolysis of terminal, non-reducing (1-&gt;4)-linked alpha-D-glucose residues with release of alpha-D-glucose.. With respect to regulation, inhibited by Hg(2+) ion and EDTA. Alpha-glycosidase with a very broad specificity. Hydrolyzes maltose and other small maltooligosaccharides but is inactive against the polymeric substrate starch. AglA is not specific with respect to the configuration at the C-4 position of its substrates because glycosidic derivatives of D-galactose are also hydrolyzed. Does not cleave beta-glycosidic bonds. In Thermotoga maritima (strain ATCC 43589 / DSM 3109 / JCM 10099 / NBRC 100826 / MSB8), this protein is Alpha-glucosidase (aglA).